We begin with the raw amino-acid sequence, 177 residues long: MTVDLYNYVATVENFPEPGVNFRDISPLMGDGVAYKQAVDAIADFAKDLNVDLIAGPESRGFIVGSPLAYALNIGFVPARKGGKLPRAAVSAAYSLEYGGENVLEIHQDAIKPGQRVLIVDDLLATGGTINATREIIEKLGGIVAGVAFIIELTDLHGREKIMQNGREVPFLTLMTY.

The protein belongs to the purine/pyrimidine phosphoribosyltransferase family. Homodimer.

Its subcellular location is the cytoplasm. The enzyme catalyses AMP + diphosphate = 5-phospho-alpha-D-ribose 1-diphosphate + adenine. It functions in the pathway purine metabolism; AMP biosynthesis via salvage pathway; AMP from adenine: step 1/1. Its function is as follows. Catalyzes a salvage reaction resulting in the formation of AMP, that is energically less costly than de novo synthesis. This Leuconostoc citreum (strain KM20) protein is Adenine phosphoribosyltransferase.